Consider the following 915-residue polypeptide: Rab3 GTPase-activating protein catalytic subunit (915 aa).

It belongs to the Rab3-GAP catalytic subunit family. The Rab3 GTPase-activating complex is a heterodimer composed of rbg-1 and rbg-2.

The protein resides in the cytoplasm. Probable catalytic subunit of a GTPase activating protein that has specificity for Rab3 subfamily. Rab3 proteins are involved in regulated exocytosis of neurotransmitters and hormones. Specifically converts active Rab3-GTP to the inactive form Rab3-GDP. This is Rab3 GTPase-activating protein catalytic subunit (rbg-1) from Caenorhabditis elegans.